The chain runs to 497 residues: 4,4'-diapolycopene oxygenase (497 aa).

It belongs to the carotenoid/retinoid oxidoreductase family. FAD serves as cofactor.

The enzyme catalyses all-trans-4,4'-diapolycopene + 4 AH2 + 4 O2 = all-trans-4,4'-diapolycopene-4,4'-dial + 4 A + 6 H2O. It catalyses the reaction all-trans-4,4'-diaponeurosporene + 2 AH2 + 2 O2 = 4,4'-diaponeurosporenal + 2 A + 3 H2O. It functions in the pathway carotenoid biosynthesis. Involved in the biosynthesis of C30 carotenoids. Catalyzes the oxidation of the terminal methyl side groups of 4,4'-diapolycopene to yield 4,4'-diapolycopen-4,4'-dial via the aldehyde intermediate 4,4'-diapolycopen-al. Also able to catalyze the oxidation of the terminal methyl side group of 4,4'-diaponeurosporene to form 4,4'-diaponeurosporen-4-al. It has moderate to low activity on the C40 substrates neurosporene and lycopene, and has no detectable activity on zeta-carotene or beta-carotene. This Methylomonas sp protein is 4,4'-diapolycopene oxygenase.